The sequence spans 273 residues: Small ribosomal subunit protein uS2 (273 aa).

The disordered stretch occupies residues Ser244–Asn273. The segment covering Asn255–Asn273 has biased composition (basic and acidic residues).

It belongs to the universal ribosomal protein uS2 family.

The protein is Small ribosomal subunit protein uS2 of Chlamydia felis (strain Fe/C-56) (Chlamydophila felis).